A 427-amino-acid polypeptide reads, in one-letter code: Putative F-box protein At4g10740 (427 aa).

The F-box domain occupies Arg2–Met47.

The sequence is that of Putative F-box protein At4g10740 from Arabidopsis thaliana (Mouse-ear cress).